The following is a 106-amino-acid chain: Iron-sulfur cluster assembly protein CyaY (106 aa).

This sequence belongs to the frataxin family.

Functionally, involved in iron-sulfur (Fe-S) cluster assembly. May act as a regulator of Fe-S biogenesis. The protein is Iron-sulfur cluster assembly protein CyaY of Escherichia fergusonii (strain ATCC 35469 / DSM 13698 / CCUG 18766 / IAM 14443 / JCM 21226 / LMG 7866 / NBRC 102419 / NCTC 12128 / CDC 0568-73).